The chain runs to 66 residues: Beta-toxin Cbo3 (66 aa).

The region spanning 1 to 66 is the LCN-type CS-alpha/beta domain; sequence KEGYIVNYHD…VWPLPKKTCN (66 aa). Disulfide bonds link C12-C65, C16-C41, C25-C46, and C29-C48. An Asparagine amide modification is found at N66.

The protein belongs to the long (4 C-C) scorpion toxin superfamily. Sodium channel inhibitor family. Beta subfamily. In terms of tissue distribution, expressed by the venom gland.

The protein resides in the secreted. Functionally, beta toxins bind voltage-independently at site-4 of sodium channels and shift the voltage of activation toward more negative potentials thereby affecting sodium channel activation and promoting spontaneous and repetitive firing. A mixture of Cbo2 and Cbo3 is weakly active on the human voltage-gated sodium channels Nav1.4/SCN4A and Nav1.6/SCN8A when tested at 200 nM. In vivo, is toxic to mice when intraperitoneally injected. The sequence is that of Beta-toxin Cbo3 from Centruroides bonito (Scorpion).